Here is a 254-residue protein sequence, read N- to C-terminus: Alcohol dehydrogenase 1 (254 aa).

10 to 33 (FVAGLGGIGFDTSREIVKSGPKNL) provides a ligand contact to NAD(+). Ser138 lines the substrate pocket. The active-site Proton acceptor is Tyr151.

It belongs to the short-chain dehydrogenases/reductases (SDR) family. In terms of assembly, homodimer.

The catalysed reaction is a primary alcohol + NAD(+) = an aldehyde + NADH + H(+). The enzyme catalyses a secondary alcohol + NAD(+) = a ketone + NADH + H(+). The polypeptide is Alcohol dehydrogenase 1 (Adh1) (Drosophila mulleri (Fruit fly)).